The primary structure comprises 778 residues: Jhy protein homolog (778 aa).

4 disordered regions span residues 62 to 271 (DRIR…PKTD), 334 to 408 (QYES…LDTS), 631 to 654 (EKGKKHKKRSSSKNTKLKGYQKRD), and 721 to 746 (IPKPKPSNLTHQASKEQKNPTYAGKE). Basic and acidic residues predominate over residues 118–139 (PIEDKYSDLRYDPNWKSKKEEG). Residues 223 to 234 (SSLSPYVKSSSS) are compositionally biased toward low complexity. Residues 334-344 (QYESTKSSNVP) show a composition bias toward polar residues. Over residues 358 to 371 (SRRPAKLKIRKQCK) the composition is skewed to basic residues. A compositionally biased stretch (polar residues) spans 375–389 (GLKSSTTEEVTASQG). The span at 390-402 (NQNNPPRQQQNQN) shows a compositional bias: low complexity. Over residues 633 to 650 (GKKHKKRSSSKNTKLKGY) the composition is skewed to basic residues. Residues 733–746 (ASKEQKNPTYAGKE) are compositionally biased toward basic and acidic residues.

Functionally, required for the normal development of cilia in brain ependymal cells lining the ventricular surfaces. The protein is Jhy protein homolog of Homo sapiens (Human).